We begin with the raw amino-acid sequence, 711 residues long: Ferric reductase transmembrane component 3 (711 aa).

The first 20 residues, 1-20 (MYWVLLCGSILLCCLSGASA), serve as a signal peptide directing secretion. Over 21–166 (SPAKTKMYGK…YANYDIGHTY (146 aa)) the chain is Extracellular. Residues N85, N108, N120, and N134 are each glycosylated (N-linked (GlcNAc...) asparagine). Residues 167–187 (GGIICAYFVGVMILASILHYL) form a helical membrane-spanning segment. At 188-237 (SYTPFKTALFKQRLVRYVRRYLTIPTIWGKHASSFSYLKIFTGFLPTRSE) the chain is on the cytoplasmic side. Residues 238 to 258 (GVIILGYLVLHTVFLAYGYQY) form a helical membrane-spanning segment. The Extracellular segment spans residues 259-280 (DPYNLIFDSRREQIARYVADRS). Positions 280–414 (SGVLAFAHFP…SGIEWIYAAI (135 aa)) constitute a Ferric oxidoreductase domain. The chain crosses the membrane as a helical span at residues 281 to 301 (GVLAFAHFPLIALFAGRNNFL). Over 302–321 (EFISGVKYTSFIMFHKWLGR) the chain is Cytoplasmic. 2 residues coordinate heme: H316 and H330. A helical membrane pass occupies residues 322–341 (MMFLDAVIHGAAYTSYSVFY). The Extracellular segment spans residues 342–353 (KDWAASKEETYW). Residues 354–374 (QFGVAALCIVGVMVFFSLAMF) traverse the membrane as a helical segment. Topologically, residues 375–376 (RK) are cytoplasmic. The chain crosses the membrane as a helical span at residues 377-397 (FFYEAFLFLHIVLGALFFYTC). H386 contacts heme. Residue W398 is a topological domain, extracellular. The chain crosses the membrane as a helical span at residues 399–419 (EHVVELSGIEWIYAAIAIWTI). H400 is a heme binding site. An FAD-binding FR-type domain is found at 415–534 (AIWTIDRLIR…EGPYGSSSPV (120 aa)). Topologically, residues 420–711 (DRLIRIVRVS…IEYFEEYQSW (292 aa)) are cytoplasmic. 479–485 (HPFTVLD) is an FAD binding site. NADP(+) is bound by residues 526–529 (GPYG) and 677–678 (CG).

The protein belongs to the ferric reductase (FRE) family. The cofactor is FAD. Requires heme as cofactor.

Its subcellular location is the cell membrane. It carries out the reaction 2 a Fe(II)-siderophore + NADP(+) + H(+) = 2 a Fe(III)-siderophore + NADPH. Siderophore-iron reductase responsible for reducing extracellular iron prior to import. Catalyzes the reductive uptake of Fe(3+) bound to di- and trihydroxamate siderophores. Fe(3+) is reduced to Fe(2+), which then dissociates from the siderophore and can be imported by the high-affinity Fe(2+) transport complex in the plasma membrane. This Saccharomyces cerevisiae (strain ATCC 204508 / S288c) (Baker's yeast) protein is Ferric reductase transmembrane component 3 (FRE3).